A 254-amino-acid polypeptide reads, in one-letter code: Alcohol dehydrogenase (254 aa).

Position 10–33 (10–33 (FVAGLGGIGLETSREIVKSGPKNL)) interacts with NAD(+). Substrate is bound at residue serine 138. Tyrosine 151 serves as the catalytic Proton acceptor.

The protein belongs to the short-chain dehydrogenases/reductases (SDR) family. In terms of assembly, homodimer.

It catalyses the reaction a primary alcohol + NAD(+) = an aldehyde + NADH + H(+). It carries out the reaction a secondary alcohol + NAD(+) = a ketone + NADH + H(+). In Scaptomyza crassifemur (Fruit fly), this protein is Alcohol dehydrogenase (Adh).